A 1260-amino-acid chain; its full sequence is Phosphatidylinositol 3,4,5-trisphosphate 5-phosphatase 2 (1260 aa).

The 97-residue stretch at 25–121 folds into the SH2 domain; sequence WYHRDLSRAA…GLVCALLLPV (97 aa). The segment covering 126-136 has biased composition (basic and acidic residues); it reads ELDPPDERDAS. The tract at residues 126 to 178 is disordered; it reads ELDPPDERDASDGEDEKPPLPPRSGTSVSAPLGPSSPPAAPEPPTPAVESAPN. S136 bears the Phosphoserine mark. Positions 159–171 are enriched in pro residues; the sequence is PSSPPAAPEPPTP. 2 positions are modified to phosphoserine: S243 and S355. Y888 is subject to Phosphotyrosine. S892 carries the phosphoserine modification. Positions 899–1120 are disordered; it reads GAKSKAPSVS…FLGEAAGGDD (222 aa). Over residues 940–952 the composition is skewed to pro residues; that stretch reads PPPTGRPPAPPRA. Residues 946–951 carry the SH3-binding motif; the sequence is PPAPPR. Positions 953 to 967 are enriched in basic and acidic residues; that stretch reads APREEPLTPRLKPEG. At T960 the chain carries Phosphothreonine. Positions 985–988 match the NPXY motif motif; sequence NPAY. At Y988 the chain carries Phosphotyrosine. Pro residues-rich tracts occupy residues 998 to 1013, 1050 to 1061, and 1090 to 1108; these read LLPP…PVPP, LPPPDFPPPPLP, and LPPP…PLPP. A Phosphoserine modification is found at S1133. Y1164 is modified (phosphotyrosine). The disordered stretch occupies residues 1181-1200; the sequence is EDLAEEAPCPQAGRTGGLGE. In terms of domain architecture, SAM spans 1198-1260; sequence LGEAGMGAWL…LLLDTLQLSK (63 aa). Residue S1259 is modified to Phosphoserine.

This sequence belongs to the inositol 1,4,5-trisphosphate 5-phosphatase family. In terms of assembly, interacts with tyrosine phosphorylated form of SHC1. Interacts with EGFR. Upon stimulation by the EGF signaling pathway, it forms a complex with SHC1 and EGFR. Interacts with cytoskeletal protein SORBS3/vinexin, promoting its localization to the periphery of cells. Forms a complex with filamin (FLNA or FLNB), actin, GPIb (GP1BA or GP1BB) that regulates cortical and submembraneous actin. Interacts with c-Met/MET, when c-Met/MET is phosphorylated on 'Tyr-1356'. Interacts with p130Cas/BCAR1. Interacts with CENTD3/ARAP3 via its SAM domain. Interacts with c-Cbl/CBL and CAP/SORBS1. Interacts with activated EPHA2 receptor. Interacts with receptor FCGR2A. Interacts with receptor FCGR2B. Interacts with tyrosine kinase ABL1. Interacts with tyrosine kinase TEC. Interacts with CSF1R. Interacts (via N-terminus) with SH3YL1 (via SH3 domain). Interacts with FCRL6 (tyrosine phosphorylated form). Interacts (via SH2 domain) with tyrosine phosphorylated KLRC1 (via ITIM). Interacts with NEDD9/HEF1. Post-translationally, tyrosine phosphorylated by the members of the SRC family after exposure to a diverse array of extracellular stimuli such as insulin, growth factors such as EGF or PDGF, chemokines, integrin ligands and hypertonic and oxidative stress. May be phosphorylated upon IgG receptor FCGR2B-binding. Phosphorylated at Tyr-988 following cell attachment and spreading. Phosphorylated at Tyr-1164 following EGF signaling pathway stimulation. Expressed abundantly in skeletal muscle tissue.

Its subcellular location is the cytoplasm. It localises to the cytosol. The protein resides in the cytoskeleton. The protein localises to the membrane. It is found in the cell projection. Its subcellular location is the filopodium. It localises to the lamellipodium. The protein resides in the basal cell membrane. The protein localises to the nucleus. It is found in the nucleus speckle. Its subcellular location is the spindle pole. The catalysed reaction is a 1,2-diacyl-sn-glycero-3-phospho-(1D-myo-inositol-3,4,5-trisphosphate) + H2O = a 1,2-diacyl-sn-glycero-3-phospho-(1D-myo-inositol-3,4-bisphosphate) + phosphate. It catalyses the reaction 1,2-dioctanoyl-sn-glycero-3-phospho-(1D-myo-inositol-3,4,5-trisphosphate) + H2O = 1,2-dioctanoyl-sn-glycero-3-phospho-(1D-myo-inositol-3,4-bisphosphate) + phosphate. The enzyme catalyses 1,2-dihexadecanoyl-sn-glycero-3-phospho-(1D-myo-inositol-3,4,5-trisphosphate) + H2O = 1,2-dihexadecanoyl-sn-glycero-3-phospho-(1D-myo-inositol-3,4-bisphosphate) + phosphate. Activated upon translocation to the sites of synthesis of PtdIns(3,4,5)P3 in the membrane. Enzymatic activity is enhanced in the presence of phosphatidylserine. Functionally, phosphatidylinositol (PtdIns) phosphatase that specifically hydrolyzes the 5-phosphate of phosphatidylinositol-3,4,5-trisphosphate (PtdIns(3,4,5)P3) to produce PtdIns(3,4)P2, thereby negatively regulating the PI3K (phosphoinositide 3-kinase) pathways. Required for correct mitotic spindle orientation and therefore progression of mitosis. Plays a central role in regulation of PI3K-dependent insulin signaling, although the precise molecular mechanisms and signaling pathways remain unclear. While overexpression reduces both insulin-stimulated MAP kinase and Akt activation, its absence does not affect insulin signaling or GLUT4 trafficking. Confers resistance to dietary obesity. May act by regulating AKT2, but not AKT1, phosphorylation at the plasma membrane. Part of a signaling pathway that regulates actin cytoskeleton remodeling. Required for the maintenance and dynamic remodeling of actin structures as well as in endocytosis, having a major impact on ligand-induced EGFR internalization and degradation. Participates in regulation of cortical and submembraneous actin by hydrolyzing PtdIns(3,4,5)P3 thereby regulating membrane ruffling. Regulates cell adhesion and cell spreading. Required for HGF-mediated lamellipodium formation, cell scattering and spreading. Acts as a negative regulator of EPHA2 receptor endocytosis by inhibiting via PI3K-dependent Rac1 activation. Acts as a regulator of neuritogenesis by regulating PtdIns(3,4,5)P3 level and is required to form an initial protrusive pattern, and later, maintain proper neurite outgrowth. Acts as a negative regulator of the FC-gamma-RIIA receptor (FCGR2A). Mediates signaling from the FC-gamma-RIIB receptor (FCGR2B), playing a central role in terminating signal transduction from activating immune/hematopoietic cell receptor systems. Involved in EGF signaling pathway. Upon stimulation by EGF, it is recruited by EGFR and dephosphorylates PtdIns(3,4,5)P3. Plays a negative role in regulating the PI3K-PKB pathway, possibly by inhibiting PKB activity. Down-regulates Fc-gamma-R-mediated phagocytosis in macrophages independently of INPP5D/SHIP1. In macrophages, down-regulates NF-kappa-B-dependent gene transcription by regulating macrophage colony-stimulating factor (M-CSF)-induced signaling. Plays a role in the localization of AURKA and NEDD9/HEF1 to the basolateral membrane at interphase in polarized cysts, thereby mediates cell cycle homeostasis, cell polarization and cilia assembly. Additionally promotion of cilia growth is also facilitated by hydrolysis of (PtdIns(3,4,5)P3) to PtdIns(3,4)P2. Promotes formation of apical membrane-initiation sites during the initial stages of lumen formation via Rho family-induced actin filament organization and CTNNB1 localization to cell-cell contacts. May also hydrolyze PtdIns(1,3,4,5)P4, and could thus affect the levels of the higher inositol polyphosphates like InsP6. Involved in endochondral ossification. The chain is Phosphatidylinositol 3,4,5-trisphosphate 5-phosphatase 2 from Sus scrofa (Pig).